The following is a 107-amino-acid chain: Nucleoid-associated protein A1C_06705 (107 aa).

Belongs to the YbaB/EbfC family. Homodimer.

It localises to the cytoplasm. The protein localises to the nucleoid. Its function is as follows. Binds to DNA and alters its conformation. May be involved in regulation of gene expression, nucleoid organization and DNA protection. The protein is Nucleoid-associated protein A1C_06705 of Rickettsia akari (strain Hartford).